We begin with the raw amino-acid sequence, 474 residues long: Synaptotagmin-17 (474 aa).

The segment at 60-117 is disordered; the sequence is WLMASRSNDKDGDSVHTASDVPLTPRTNSPDGRRSSSDTSKSTYSLTRRISSLDSRRP. Residues 96–117 are compositionally biased toward low complexity; that stretch reads SDTSKSTYSLTRRISSLDSRRP. S118 and S119 each carry phosphoserine. C2 domains follow at residues 184–310 and 321–455; these read QLGM…HWWK and ELGE…EQWH.

It belongs to the synaptotagmin family. As to expression, expressed in brain and kidney.

Its subcellular location is the membrane. Plays a role in dendrite formation by melanocytes. The sequence is that of Synaptotagmin-17 (Syt17) from Rattus norvegicus (Rat).